The primary structure comprises 136 residues: ATP synthase epsilon chain (136 aa).

Belongs to the ATPase epsilon chain family. In terms of assembly, F-type ATPases have 2 components, CF(1) - the catalytic core - and CF(0) - the membrane proton channel. CF(1) has five subunits: alpha(3), beta(3), gamma(1), delta(1), epsilon(1). CF(0) has three main subunits: a, b and c.

The protein localises to the cell membrane. Produces ATP from ADP in the presence of a proton gradient across the membrane. The sequence is that of ATP synthase epsilon chain from Ureaplasma parvum serovar 3 (strain ATCC 27815 / 27 / NCTC 11736).